The primary structure comprises 153 residues: UPF0768 protein PB2B2.18 (153 aa).

Belongs to the UPF0768 family.

The sequence is that of UPF0768 protein PB2B2.18 from Schizosaccharomyces pombe (strain 972 / ATCC 24843) (Fission yeast).